Here is a 378-residue protein sequence, read N- to C-terminus: Glutamate 5-kinase (378 aa).

Position 20 (Lys-20) interacts with ATP. Ser-60, Asp-147, and Asn-159 together coordinate substrate. ATP is bound by residues 179–180 and 221–227; these read TD and TGGMLTK. The PUA domain occupies 286-364; sequence RGRVVLDDGA…SQIARILGSM (79 aa).

It belongs to the glutamate 5-kinase family.

Its subcellular location is the cytoplasm. The enzyme catalyses L-glutamate + ATP = L-glutamyl 5-phosphate + ADP. It functions in the pathway amino-acid biosynthesis; L-proline biosynthesis; L-glutamate 5-semialdehyde from L-glutamate: step 1/2. In terms of biological role, catalyzes the transfer of a phosphate group to glutamate to form L-glutamate 5-phosphate. The protein is Glutamate 5-kinase of Bordetella pertussis (strain Tohama I / ATCC BAA-589 / NCTC 13251).